We begin with the raw amino-acid sequence, 429 residues long: Adenylosuccinate synthetase (429 aa).

GTP is bound by residues 12–18 (GDEGKGK) and 40–42 (GHT). Residue D13 is the Proton acceptor of the active site. Mg(2+) is bound by residues D13 and G40. IMP is bound by residues 13–16 (DEGK), 38–41 (NAGH), T129, R143, Q223, T238, and R302. The active-site Proton donor is the H41. 298–304 (TVTGRRR) contributes to the substrate binding site. Residues R304, 330-332 (KLD), and 412-414 (STS) contribute to the GTP site.

The protein belongs to the adenylosuccinate synthetase family. In terms of assembly, homodimer. Requires Mg(2+) as cofactor.

It localises to the cytoplasm. It catalyses the reaction IMP + L-aspartate + GTP = N(6)-(1,2-dicarboxyethyl)-AMP + GDP + phosphate + 2 H(+). Its pathway is purine metabolism; AMP biosynthesis via de novo pathway; AMP from IMP: step 1/2. Functionally, plays an important role in the de novo pathway of purine nucleotide biosynthesis. Catalyzes the first committed step in the biosynthesis of AMP from IMP. In Granulibacter bethesdensis (strain ATCC BAA-1260 / CGDNIH1), this protein is Adenylosuccinate synthetase.